The chain runs to 283 residues: ATP phosphoribosyltransferase (283 aa).

This sequence belongs to the ATP phosphoribosyltransferase family. Long subfamily. The cofactor is Mg(2+).

The protein resides in the cytoplasm. The enzyme catalyses 1-(5-phospho-beta-D-ribosyl)-ATP + diphosphate = 5-phospho-alpha-D-ribose 1-diphosphate + ATP. It functions in the pathway amino-acid biosynthesis; L-histidine biosynthesis; L-histidine from 5-phospho-alpha-D-ribose 1-diphosphate: step 1/9. Feedback inhibited by histidine. Its function is as follows. Catalyzes the condensation of ATP and 5-phosphoribose 1-diphosphate to form N'-(5'-phosphoribosyl)-ATP (PR-ATP). Has a crucial role in the pathway because the rate of histidine biosynthesis seems to be controlled primarily by regulation of HisG enzymatic activity. In Rhodococcus opacus (strain B4), this protein is ATP phosphoribosyltransferase.